The primary structure comprises 659 residues: DNA mismatch repair protein MutL (659 aa).

A disordered region spans residues 338–459 (GAPRGASKPG…DTTSERDSLP (122 aa)). Residues 352–362 (SPEHSPTDRDA) show a composition bias toward basic and acidic residues. Residues 374–391 (SDGNGQRTAASGATSESP) are compositionally biased toward polar residues.

Belongs to the DNA mismatch repair MutL/HexB family.

Functionally, this protein is involved in the repair of mismatches in DNA. It is required for dam-dependent methyl-directed DNA mismatch repair. May act as a 'molecular matchmaker', a protein that promotes the formation of a stable complex between two or more DNA-binding proteins in an ATP-dependent manner without itself being part of a final effector complex. This chain is DNA mismatch repair protein MutL, found in Halobacterium salinarum (strain ATCC 29341 / DSM 671 / R1).